A 213-amino-acid polypeptide reads, in one-letter code: Nucleolar protein 12 (213 aa).

A coiled-coil region spans residues glycine 33 to valine 96. The interval threonine 109 to glutamate 213 is disordered. Positions alanine 130–serine 139 are enriched in acidic residues. A compositionally biased stretch (basic residues) spans alanine 170–arginine 182.

This sequence belongs to the RRP17 family. In terms of assembly, interacts with KIAA1191.

It localises to the nucleus. It is found in the nucleolus. The protein resides in the cytoplasm. In terms of biological role, multifunctional RNA binding protein that plays a role in RNA metabolism and DNA maintenance. Participates in the resolution of DNA stress and the maintenance of genome integrity by localizing to sites of DNA insults. Also plays a role in proper nucleolar organization by limiting nucleolar size and regulating nucleolar number. Mechanistically, regulates the nucleolar levels of fibrillarin and nucleolin, two key players in pre-rRNA processing and ribosome assembly. This Pongo abelii (Sumatran orangutan) protein is Nucleolar protein 12 (NOL12).